The sequence spans 126 residues: Holo-[acyl-carrier-protein] synthase (126 aa).

Positions 9 and 58 each coordinate Mg(2+).

Belongs to the P-Pant transferase superfamily. AcpS family. Requires Mg(2+) as cofactor.

Its subcellular location is the cytoplasm. The enzyme catalyses apo-[ACP] + CoA = holo-[ACP] + adenosine 3',5'-bisphosphate + H(+). Its function is as follows. Transfers the 4'-phosphopantetheine moiety from coenzyme A to a Ser of acyl-carrier-protein. The polypeptide is Holo-[acyl-carrier-protein] synthase (Enterobacter sp. (strain 638)).